Consider the following 112-residue polypeptide: UPF0342 protein STER_0693 (112 aa).

It belongs to the UPF0342 family.

The chain is UPF0342 protein STER_0693 from Streptococcus thermophilus (strain ATCC BAA-491 / LMD-9).